The primary structure comprises 756 residues: Centromere protein I (756 aa).

A disordered region spans residues 1–60 (MSPQKRVKNVQAQNRTSQGSSSFQTTLSAWKVKQDPSNSKNISKHGQNNPVGDYEHADDQ). Composition is skewed to polar residues over residues 10-28 (VQAQNRTSQGSSSFQTTLS) and 35-50 (DPSNSKNISKHGQNNP).

Belongs to the CENP-I/CTF3 family. In terms of assembly, component of the CENPA-CAD complex, composed of CENPI, CENPK, CENPL, CENPO, CENPP, CENPQ, CENPR and CENPS. The CENPA-CAD complex interacts with the CENPA-NAC complex, at least composed of CENPA, CENPC, CENPH, CENPM, CENPN, CENPT and CENPU. Interacts with SENP6. Post-translationally, sumoylated. Sumoylated form can be polyubiquitinated by RNF4, leading to its degradation. Desumoylation by SENP6 prevents its degradation.

It is found in the nucleus. The protein resides in the chromosome. Its subcellular location is the centromere. Its function is as follows. Component of the CENPA-CAD (nucleosome distal) complex, a complex recruited to centromeres which is involved in assembly of kinetochore proteins, mitotic progression and chromosome segregation. May be involved in incorporation of newly synthesized CENPA into centromeres via its interaction with the CENPA-NAC complex. Required for the localization of CENPF, MAD1L1 and MAD2 (MAD2L1 or MAD2L2) to kinetochores. Involved in the response of gonadal tissues to follicle-stimulating hormone. The sequence is that of Centromere protein I (CENPI) from Homo sapiens (Human).